An 87-amino-acid polypeptide reads, in one-letter code: UPF0335 protein Meso_3367 (87 aa).

Belongs to the UPF0335 family.

This is UPF0335 protein Meso_3367 from Chelativorans sp. (strain BNC1).